The following is a 341-amino-acid chain: tRNA N6-adenosine threonylcarbamoyltransferase (341 aa).

The Fe cation site is built by His-114 and His-118. Residues 136-140 (LVSGG), Asp-169, Gly-182, Asp-186, and Asn-278 contribute to the substrate site. Asp-304 provides a ligand contact to Fe cation.

This sequence belongs to the KAE1 / TsaD family. Fe(2+) is required as a cofactor.

Its subcellular location is the cytoplasm. It carries out the reaction L-threonylcarbamoyladenylate + adenosine(37) in tRNA = N(6)-L-threonylcarbamoyladenosine(37) in tRNA + AMP + H(+). Its function is as follows. Required for the formation of a threonylcarbamoyl group on adenosine at position 37 (t(6)A37) in tRNAs that read codons beginning with adenine. Is involved in the transfer of the threonylcarbamoyl moiety of threonylcarbamoyl-AMP (TC-AMP) to the N6 group of A37, together with TsaE and TsaB. TsaD likely plays a direct catalytic role in this reaction. The chain is tRNA N6-adenosine threonylcarbamoyltransferase from Lactococcus lactis subsp. cremoris (strain SK11).